A 228-amino-acid chain; its full sequence is HTH-type transcriptional activator FasR (228 aa).

The segment at 1–39 is disordered; the sequence is MSDLAKTAQRRALRSSGSARPDEDVPAPNRRGNRLPRDE. The HTH tetR-type domain maps to 38–98; the sequence is DERRGQLLVV…AVLHRHVENL (61 aa). Positions 61–80 form a DNA-binding region, H-T-H motif; that stretch reads GMDEIADRAGVSKPVLYQHF.

In terms of assembly, homodimer.

FasR:DNA binding is regulated by long-chain acyl-CoAs (C14- to C26-CoA), which act as effector molecules that modulate the affinity of FasR for its DNA binding sequences and therefore modulate the expression of the essential fas-acpS operon. FasR activity is not affected by mycolic acid biosynthesis intermediates. Functionally, transcriptional activator that plays a central role in sensing mycobacterial long-chain fatty acids and regulating lipid biosynthesis. Activates the expression of the genes encoding the fatty acid synthase (fas) and the 4-phosphopantetheinyl transferase (acpS), whose products are involved in the fatty acid and mycolic acid biosynthesis. Specifically binds to three conserved operator sequences present in the fas-acpS promoter region. Not essential for M.tuberculosis viability, although it is required for the optimal growth in vitro and for virulence in macrophages and in a mouse model of infection. The sequence is that of HTH-type transcriptional activator FasR from Mycobacterium tuberculosis (strain ATCC 25618 / H37Rv).